Reading from the N-terminus, the 438-residue chain is Telomeric repeat-binding factor 1 (438 aa).

The span at 1–10 shows a compositional bias: polar residues; that stretch reads MAEDVSSTAP. The segment at 1-36 is disordered; sequence MAEDVSSTAPSPRGCADGRDADPTEEQMAQTQRNDQ. Ala2 bears the N-acetylalanine mark. Ser11 is subject to Phosphoserine. The TRFH dimerization stretch occupies residues 58 to 268; it reads EEEEEDSGLV…AAAKVVESKR (211 aa). Residue Lys213 forms a Glycyl lysine isopeptide (Lys-Gly) (interchain with G-Cter in SUMO2) linkage. Ser219 carries the post-translational modification Phosphoserine; by ATM. Residues 265-378 are interaction with RLIM; sequence ESKRTRTITS…PVTPEKHRAR (114 aa). A disordered region spans residues 268-311; that stretch reads RTRTITSQDKPSGNDVEMETEANLDTRKSVSDKQSAVTESSEGT. Residues 299-311 show a composition bias toward polar residues; it reads DKQSAVTESSEGT. Lys325 participates in a covalent cross-link: Glycyl lysine isopeptide (Lys-Gly) (interchain with G-Cter in SUMO2). The disordered stretch occupies residues 326 to 375; sequence LQHGTQQQDLNKKERRVGTPQSTKKKKESRRATESRIPVSKSQPVTPEKH. Positions 337–356 match the Nuclear localization signal motif; sequence KKERRVGTPQSTKKKKESRR. Lys366 is covalently cross-linked (Glycyl lysine isopeptide (Lys-Gly) (interchain with G-Cter in SUMO2)). The HTH myb-type domain occupies 375–432; the sequence is HRARKRQAWLWEEDKNLRSGVRKYGEGNWSKILLHYKFNNRTSVMLKDRWRTMKKLKL. The H-T-H motif DNA-binding region spans 403 to 428; sequence WSKILLHYKFNNRTSVMLKDRWRTMK.

Homodimer; can contain both isoforms. Found in a complex with POT1; TINF2 and TNKS1. Interacts with ATM, TINF2, TNKS1, TNKS2, PINX1, NEK2 and MAPRE1. Component of the shelterin complex (telosome) composed of TERF1, TERF2, TINF2, TERF2IP ACD and POT1. Interacts with RLIM (via N-terminus). Interacts with FBXO4. Interaction with TINF2 protects against interaction with FBXO4 and subsequent polyubiquitination and proteasomal degradation. Interacts with GNL3L; this interaction promotes homodimerization. Interacts with TIN2. Interactions with GNL3L and TIN2 are mutually exclusive. Interacts with RTEL1. Interacts with CCDC79/TERB1. In terms of processing, phosphorylated preferentially on Ser-219 in an ATM-dependent manner in response to ionizing DNA damage. ADP-ribosylation by TNKS1 or TNKS2 diminishes its ability to bind to telomeric DNA. Post-translationally, ubiquitinated by RLIM/RNF12, leading to its degradation by the proteasome. Ubiquitinated by a SCF (SKP1-CUL1-F-box protein) ubiquitin-protein ligase complex, leading to its degradation by the proteasome.

It is found in the nucleus. The protein localises to the chromosome. It localises to the telomere. The protein resides in the cytoplasm. Its subcellular location is the cytoskeleton. It is found in the spindle. Binds the telomeric double-stranded 5'-TTAGGG-3' repeat and negatively regulates telomere length. Involved in the regulation of the mitotic spindle. Component of the shelterin complex (telosome) that is involved in the regulation of telomere length and protection. Shelterin associates with arrays of double-stranded 5'-TTAGGG-3' repeats added by telomerase and protects chromosome ends; without its protective activity, telomeres are no longer hidden from the DNA damage surveillance and chromosome ends are inappropriately processed by DNA repair pathways. The chain is Telomeric repeat-binding factor 1 (TERF1) from Cricetulus griseus (Chinese hamster).